A 423-amino-acid polypeptide reads, in one-letter code: UDP-N-acetylglucosamine 1-carboxyvinyltransferase 2 (423 aa).

Position 23–24 (23–24 (KN)) interacts with phosphoenolpyruvate. R96 provides a ligand contact to UDP-N-acetyl-alpha-D-glucosamine. The Proton donor role is filled by C120. A 2-(S-cysteinyl)pyruvic acid O-phosphothioketal modification is found at C120. UDP-N-acetyl-alpha-D-glucosamine contacts are provided by residues 125–129 (RPIDL), D309, and V331.

The protein belongs to the EPSP synthase family. MurA subfamily.

The protein resides in the cytoplasm. The catalysed reaction is phosphoenolpyruvate + UDP-N-acetyl-alpha-D-glucosamine = UDP-N-acetyl-3-O-(1-carboxyvinyl)-alpha-D-glucosamine + phosphate. It functions in the pathway cell wall biogenesis; peptidoglycan biosynthesis. Its function is as follows. Cell wall formation. Adds enolpyruvyl to UDP-N-acetylglucosamine. In Streptococcus agalactiae serotype Ia (strain ATCC 27591 / A909 / CDC SS700), this protein is UDP-N-acetylglucosamine 1-carboxyvinyltransferase 2.